The sequence spans 131 residues: Peptide methionine sulfoxide reductase MsrB (131 aa).

The region spanning 8–130 (LEEWKQMLDP…NSVCLDLVPR (123 aa)) is the MsrB domain. Cysteine 47, cysteine 50, cysteine 96, and cysteine 99 together coordinate Zn(2+). Catalysis depends on cysteine 119, which acts as the Nucleophile.

The protein belongs to the MsrB Met sulfoxide reductase family. Zn(2+) is required as a cofactor.

It carries out the reaction L-methionyl-[protein] + [thioredoxin]-disulfide + H2O = L-methionyl-(R)-S-oxide-[protein] + [thioredoxin]-dithiol. The polypeptide is Peptide methionine sulfoxide reductase MsrB (Pseudomonas syringae pv. syringae (strain B728a)).